A 273-amino-acid chain; its full sequence is MNNRVHQGHLARKRFGQNFLNDRFVIDSIVSAINPQKGQAMVEIGPGLAALTEPVGERLDKLTVIELDRDLAARLQTHPFLGPKLTIYQQDAMTMNFGELSAQLGQPLRVFGNLPYNISTPLMFHLFSYTDAIADMHFMLQKEVVNRLVAGPNSKEYGRLSVMAQYYCQVIPVLEVPPSAFTPPPKVDSAVVRLVPHATMPYPVKDIRVLSRITTEAFNQRRKTIRNSLGNLFSVETLTEMGIDPAMRAENISVAQYCQMANYLSENAPLKES.

S-adenosyl-L-methionine contacts are provided by asparagine 18, leucine 20, glycine 45, glutamate 66, aspartate 91, and asparagine 113.

It belongs to the class I-like SAM-binding methyltransferase superfamily. rRNA adenine N(6)-methyltransferase family. RsmA subfamily.

The protein localises to the cytoplasm. It catalyses the reaction adenosine(1518)/adenosine(1519) in 16S rRNA + 4 S-adenosyl-L-methionine = N(6)-dimethyladenosine(1518)/N(6)-dimethyladenosine(1519) in 16S rRNA + 4 S-adenosyl-L-homocysteine + 4 H(+). In terms of biological role, specifically dimethylates two adjacent adenosines (A1518 and A1519) in the loop of a conserved hairpin near the 3'-end of 16S rRNA in the 30S particle. May play a critical role in biogenesis of 30S subunits. The polypeptide is Ribosomal RNA small subunit methyltransferase A (Salmonella typhimurium (strain LT2 / SGSC1412 / ATCC 700720)).